The sequence spans 225 residues: Putative amino-acid transporter YggA (225 aa).

5 helical membrane-spanning segments follow: residues 1–21 (MFAT…PIGA), 37–57 (LLTA…GVFG), 65–85 (SPIG…WFGI), 116–136 (LGVT…LGSF), and 150–170 (AVAM…AVVL).

It belongs to the LysE/ArgO transporter (TC 2.A.75) family.

The protein localises to the cell membrane. This chain is Putative amino-acid transporter YggA, found in Aeromonas hydrophila.